The primary structure comprises 862 residues: DNA mismatch repair protein MutS (862 aa).

613–620 provides a ligand contact to ATP; it reads GPNMAGKS.

Belongs to the DNA mismatch repair MutS family.

This protein is involved in the repair of mismatches in DNA. It is possible that it carries out the mismatch recognition step. This protein has a weak ATPase activity. This chain is DNA mismatch repair protein MutS, found in Desulfitobacterium hafniense (strain Y51).